The primary structure comprises 142 residues: Hemoglobin subunit alpha-1/2 (142 aa).

The Globin domain occupies 2–142 (VLSADDKTNI…VSTVLTSKYR (141 aa)). S4 is subject to Phosphoserine. N6-succinyllysine is present on K8. At T9 the chain carries Phosphothreonine. Residue K12 is modified to N6-succinyllysine. An N6-acetyllysine; alternate modification is found at K17. At K17 the chain carries N6-succinyllysine; alternate. A Phosphotyrosine modification is found at Y25. K41 bears the N6-succinyllysine mark. S50 carries the post-translational modification Phosphoserine. O2 is bound at residue H59. Position 88 (H88) interacts with heme b. S103 carries the phosphoserine modification. A Phosphothreonine modification is found at T109. S125 and S132 each carry phosphoserine. 2 positions are modified to phosphothreonine: T135 and T138. Position 139 is a phosphoserine (S139).

The protein belongs to the globin family. In terms of assembly, heterotetramer of two alpha chains and two beta chains. In terms of tissue distribution, red blood cells.

In terms of biological role, involved in oxygen transport from the lung to the various peripheral tissues. Its function is as follows. Hemopressin acts as an antagonist peptide of the cannabinoid receptor CNR1. Hemopressin-binding efficiently blocks cannabinoid receptor CNR1 and subsequent signaling. The chain is Hemoglobin subunit alpha-1/2 (Hba1) from Rattus norvegicus (Rat).